A 373-amino-acid chain; its full sequence is Anhydro-N-acetylmuramic acid kinase (373 aa).

13–20 (GTSMDGID) lines the ATP pocket.

It belongs to the anhydro-N-acetylmuramic acid kinase family.

The catalysed reaction is 1,6-anhydro-N-acetyl-beta-muramate + ATP + H2O = N-acetyl-D-muramate 6-phosphate + ADP + H(+). It functions in the pathway amino-sugar metabolism; 1,6-anhydro-N-acetylmuramate degradation. The protein operates within cell wall biogenesis; peptidoglycan recycling. Functionally, catalyzes the specific phosphorylation of 1,6-anhydro-N-acetylmuramic acid (anhMurNAc) with the simultaneous cleavage of the 1,6-anhydro ring, generating MurNAc-6-P. Is required for the utilization of anhMurNAc either imported from the medium or derived from its own cell wall murein, and thus plays a role in cell wall recycling. This chain is Anhydro-N-acetylmuramic acid kinase, found in Agrobacterium fabrum (strain C58 / ATCC 33970) (Agrobacterium tumefaciens (strain C58)).